We begin with the raw amino-acid sequence, 394 residues long: Methylthioribose kinase (394 aa).

Residues Asn44, Lys61, and 115 to 117 (EDL) each bind ATP. Residue Asp233 participates in substrate binding. 250–252 (DPE) lines the ATP pocket. Arg337 serves as a coordination point for substrate.

Belongs to the methylthioribose kinase family. Homodimer.

The enzyme catalyses 5-(methylsulfanyl)-D-ribose + ATP = 5-(methylsulfanyl)-alpha-D-ribose 1-phosphate + ADP + H(+). It functions in the pathway amino-acid biosynthesis; L-methionine biosynthesis via salvage pathway; S-methyl-5-thio-alpha-D-ribose 1-phosphate from S-methyl-5'-thioadenosine (hydrolase route): step 2/2. Catalyzes the phosphorylation of methylthioribose into methylthioribose-1-phosphate. The chain is Methylthioribose kinase from Bacillus velezensis (strain DSM 23117 / BGSC 10A6 / LMG 26770 / FZB42) (Bacillus amyloliquefaciens subsp. plantarum).